The following is a 326-amino-acid chain: tRNA-modifying protein YgfZ (326 aa).

Folate is bound by residues W27 and W189.

This sequence belongs to the tRNA-modifying YgfZ family.

It localises to the cytoplasm. Folate-binding protein involved in regulating the level of ATP-DnaA and in the modification of some tRNAs. It is probably a key factor in regulatory networks that act via tRNA modification, such as initiation of chromosomal replication. This Escherichia coli (strain SE11) protein is tRNA-modifying protein YgfZ.